Here is a 424-residue protein sequence, read N- to C-terminus: Type II methyltransferase M.BspRI (424 aa).

An SAM-dependent MTase C5-type domain is found at 58 to 408 (FNVLSLFCGA…KSIAQFAADY (351 aa)). Catalysis depends on Cys156, which acts as the S-methylcysteine intermediate. Cys181 is modified (S-methylcysteine; by autocatalysis).

This sequence belongs to the class I-like SAM-binding methyltransferase superfamily. C5-methyltransferase family. Monomer. In terms of processing, in the absence of DNA, can self-methylate two cysteine residues.

It carries out the reaction a 2'-deoxycytidine in DNA + S-adenosyl-L-methionine = a 5-methyl-2'-deoxycytidine in DNA + S-adenosyl-L-homocysteine + H(+). Its function is as follows. A methylase, recognizes the double-stranded sequence 5'-GGCC-3', methylates C-3 on both strands, and protects the DNA from cleavage by the BspRI endonuclease. This chain is Type II methyltransferase M.BspRI (bspRIM), found in Lysinibacillus sphaericus (Bacillus sphaericus).